Consider the following 123-residue polypeptide: UPF0299 membrane protein VV1471 (123 aa).

4 consecutive transmembrane segments (helical) span residues 8–28 (LFGLVVSFGLIFLALTIGSGI), 35–55 (SVPGSVIGMLVLFVSMAIGLV), 71–91 (MILLFVPISVGLMEHFDMLIA), and 94–114 (LPIIASAIGGSLIVLVSLGWL).

This sequence belongs to the UPF0299 family.

It localises to the cell inner membrane. The protein is UPF0299 membrane protein VV1471 of Vibrio vulnificus (strain YJ016).